Consider the following 502-residue polypeptide: Histidine--tRNA ligase (502 aa).

The protein belongs to the class-II aminoacyl-tRNA synthetase family. As to quaternary structure, homodimer.

Its subcellular location is the cytoplasm. The enzyme catalyses tRNA(His) + L-histidine + ATP = L-histidyl-tRNA(His) + AMP + diphosphate + H(+). In Brucella ovis (strain ATCC 25840 / 63/290 / NCTC 10512), this protein is Histidine--tRNA ligase.